Here is a 175-residue protein sequence, read N- to C-terminus: Large ribosomal subunit protein uL10 (175 aa).

The protein belongs to the universal ribosomal protein uL10 family. As to quaternary structure, part of the ribosomal stalk of the 50S ribosomal subunit. The N-terminus interacts with L11 and the large rRNA to form the base of the stalk. The C-terminus forms an elongated spine to which L12 dimers bind in a sequential fashion forming a multimeric L10(L12)X complex.

In terms of biological role, forms part of the ribosomal stalk, playing a central role in the interaction of the ribosome with GTP-bound translation factors. The polypeptide is Large ribosomal subunit protein uL10 (Synechococcus sp. (strain CC9605)).